The primary structure comprises 256 residues: Cell division protein ZapD (256 aa).

This sequence belongs to the ZapD family. As to quaternary structure, interacts with FtsZ.

The protein resides in the cytoplasm. Functionally, cell division factor that enhances FtsZ-ring assembly. Directly interacts with FtsZ and promotes bundling of FtsZ protofilaments, with a reduction in FtsZ GTPase activity. The polypeptide is Cell division protein ZapD (Aromatoleum aromaticum (strain DSM 19018 / LMG 30748 / EbN1) (Azoarcus sp. (strain EbN1))).